Here is a 171-residue protein sequence, read N- to C-terminus: Large ribosomal subunit protein bL9 (171 aa).

Belongs to the bacterial ribosomal protein bL9 family.

In terms of biological role, binds to the 23S rRNA. This Rickettsia canadensis (strain McKiel) protein is Large ribosomal subunit protein bL9.